We begin with the raw amino-acid sequence, 201 residues long: uncharacterized protein (201 aa).

In terms of biological role, may have a role in tissue tropism within the insect larvae. This is an uncharacterized protein from Lepidoptera (butterflies and moths).